Consider the following 120-residue polypeptide: Flagellar protein FliT (120 aa).

The segment at 1 to 50 is required for homodimerization; it reads MERHQHLLSEYQQILTLSEQMLMLATVENWDALVDLEMAYLKAVENTANI. The tract at residues 60–98 is fliD binding; the sequence is LQELLRQKLRSILENEIEIKRLLQRRLDKLSELVGQSTR.

This sequence belongs to the FliT family. Homodimer. Interacts with FliD and FlhC.

Its subcellular location is the cytoplasm. The protein localises to the cytosol. In terms of biological role, dual-function protein that regulates the transcription of class 2 flagellar operons and that also acts as an export chaperone for the filament-capping protein FliD. As a transcriptional regulator, acts as an anti-FlhDC factor; it directly binds FlhC, thus inhibiting the binding of the FlhC/FlhD complex to class 2 promoters, resulting in decreased expression of class 2 flagellar operons. As a chaperone, effects FliD transition to the membrane by preventing its premature polymerization, and by directing it to the export apparatus. This Yersinia pseudotuberculosis serotype IB (strain PB1/+) protein is Flagellar protein FliT.